Reading from the N-terminus, the 68-residue chain is DNA-directed RNA polymerase subunit omega (68 aa).

This sequence belongs to the RNA polymerase subunit omega family. The RNAP catalytic core consists of 2 alpha, 1 beta, 1 beta' and 1 omega subunit. When a sigma factor is associated with the core the holoenzyme is formed, which can initiate transcription.

The enzyme catalyses RNA(n) + a ribonucleoside 5'-triphosphate = RNA(n+1) + diphosphate. In terms of biological role, promotes RNA polymerase assembly. Latches the N- and C-terminal regions of the beta' subunit thereby facilitating its interaction with the beta and alpha subunits. This is DNA-directed RNA polymerase subunit omega from Sulfurovum sp. (strain NBC37-1).